The primary structure comprises 197 residues: Isopentenyl-diphosphate Delta-isomerase (197 aa).

Mn(2+) contacts are provided by His41 and His48. In terms of domain architecture, Nudix hydrolase spans 46–183 (QLHRAFSVFL…SWFMTVLDAA (138 aa)). Cys83 is a catalytic residue. Cys83 provides a ligand contact to Mg(2+). Residue His85 coordinates Mn(2+). Residue Glu103 participates in Mg(2+) binding. Glu130 and Glu132 together coordinate Mn(2+). Glu132 is a catalytic residue.

This sequence belongs to the IPP isomerase type 1 family. Mg(2+) serves as cofactor. Mn(2+) is required as a cofactor.

The protein localises to the cytoplasm. The enzyme catalyses isopentenyl diphosphate = dimethylallyl diphosphate. It participates in isoprenoid biosynthesis; dimethylallyl diphosphate biosynthesis; dimethylallyl diphosphate from isopentenyl diphosphate: step 1/1. Its function is as follows. Catalyzes the 1,3-allylic rearrangement of the homoallylic substrate isopentenyl (IPP) to its highly electrophilic allylic isomer, dimethylallyl diphosphate (DMAPP). The sequence is that of Isopentenyl-diphosphate Delta-isomerase from Streptomyces avermitilis (strain ATCC 31267 / DSM 46492 / JCM 5070 / NBRC 14893 / NCIMB 12804 / NRRL 8165 / MA-4680).